The sequence spans 172 residues: Large ribosomal subunit protein uL10 (172 aa).

This sequence belongs to the universal ribosomal protein uL10 family. As to quaternary structure, part of the ribosomal stalk of the 50S ribosomal subunit. The N-terminus interacts with L11 and the large rRNA to form the base of the stalk. The C-terminus forms an elongated spine to which L12 dimers bind in a sequential fashion forming a multimeric L10(L12)X complex.

Forms part of the ribosomal stalk, playing a central role in the interaction of the ribosome with GTP-bound translation factors. The sequence is that of Large ribosomal subunit protein uL10 from Rhizobium etli (strain CIAT 652).